Here is a 415-residue protein sequence, read N- to C-terminus: L-cysteine:1D-myo-inositol 2-amino-2-deoxy-alpha-D-glucopyranoside ligase (415 aa).

Cys43 is a binding site for Zn(2+). Residues 43–46 (CGIT), Thr58, and 81–83 (NVT) contribute to the L-cysteinyl-5'-AMP site. The short motif at 45-55 (ITPYDATHLGH) is the 'HIGH' region element. The short motif at 188–193 (ERGGDP) is the 'ERGGDP' region element. Position 229 (Trp229) interacts with L-cysteinyl-5'-AMP. A Zn(2+)-binding site is contributed by Cys233. 251-253 (GSD) contacts L-cysteinyl-5'-AMP. His258 contacts Zn(2+). Val285 lines the L-cysteinyl-5'-AMP pocket. The 'KMSKS' region motif lies at 291–295 (KMSKS).

It belongs to the class-I aminoacyl-tRNA synthetase family. MshC subfamily. In terms of assembly, monomer. Requires Zn(2+) as cofactor.

The enzyme catalyses 1D-myo-inositol 2-amino-2-deoxy-alpha-D-glucopyranoside + L-cysteine + ATP = 1D-myo-inositol 2-(L-cysteinylamino)-2-deoxy-alpha-D-glucopyranoside + AMP + diphosphate + H(+). Functionally, catalyzes the ATP-dependent condensation of GlcN-Ins and L-cysteine to form L-Cys-GlcN-Ins. The sequence is that of L-cysteine:1D-myo-inositol 2-amino-2-deoxy-alpha-D-glucopyranoside ligase from Cellulomonas flavigena (strain ATCC 482 / DSM 20109 / BCRC 11376 / JCM 18109 / NBRC 3775 / NCIMB 8073 / NRS 134).